A 360-amino-acid chain; its full sequence is MALFSVRKARECWRFIRALHKGPAATLAPQKESGERVFSGIQPTGILHLGNYLGAIESWVNLQEEYDTVIYSIVDLHSITVPQDPTVLQQSILDMTAVLLACGINPEKSILFQQSKVSEHTQLSWILTCMVRLPRLQHLHQWKAKAAKQKHDGTVGLLTYPVLQAADILCYKSTHVPVGEDQVQHMELVQDLARSFNQKYGEFFPLPKSILTSMKKVKSLRDPSSKMSKSDPDKLATVRITDSPEEIVQKFRKAVTDFTSEVTYEPDSRAGVSNMVAIHAAVSGLSVEEVVRSSAGLDTARYKLLVADAVIEKFAPIRKEIEKLKMDKDHLRKVLLVGSAKAKELASPVFEEVKKLVGIL.

A mitochondrion-targeting transit peptide spans 1-18; the sequence is MALFSVRKARECWRFIRA. Residues Q42 and 48–51 contribute to the ATP site; that span reads HLGN. D167 contacts L-tryptophan. Residues 179–181, V217, and 226–230 contribute to the ATP site; these read GED and KMSKS.

It belongs to the class-I aminoacyl-tRNA synthetase family.

The protein localises to the mitochondrion matrix. It localises to the mitochondrion. The catalysed reaction is tRNA(Trp) + L-tryptophan + ATP = L-tryptophyl-tRNA(Trp) + AMP + diphosphate + H(+). Its function is as follows. Catalyzes the attachment of tryptophan to tRNA(Trp) in a two-step reaction: tryptophan is first activated by ATP to form Trp-AMP and then transferred to the acceptor end of tRNA(Trp). This is Tryptophan--tRNA ligase, mitochondrial (Wars2) from Mus musculus (Mouse).